The chain runs to 1026 residues: UPF0182 protein FRAAL6027 (1026 aa).

7 helical membrane-spanning segments follow: residues 13–33, 60–80, 108–128, 167–187, 208–228, 250–270, and 283–303; these read AKVIVPVLLAVALVIAFVAIF, ILLFLIFGAVMAVVIGTNIVL, YMKLVLVAVAAVFGLAAGLSA, FLLGFLLTAVLLSLLVTVLTH, AHISVLLGLLALLKAWAYYLD, AVLPAKLILLFISLACAVLFI, and LGAGILVLSSVVIGGIYPAFI. Residues 877–888 are compositionally biased toward low complexity; the sequence is AAAGAGTGATTT. Disordered regions lie at residues 877–916 and 958–1026; these read AAAGAGTGATTTTGGGGQATTQGGGTGAAPPGGTSGLQDA and LASP…PPPG. The span at 889–903 shows a compositional bias: gly residues; the sequence is TGGGGQATTQGGGTG. Residues 970–1001 are compositionally biased toward low complexity; it reads PTPSRSAAPTTRGTAAGSAPPGTTPAVAAPAG. Residues 1016-1026 are compositionally biased toward pro residues; the sequence is PQQPRAAPPPG.

Belongs to the UPF0182 family.

It is found in the cell membrane. This Frankia alni (strain DSM 45986 / CECT 9034 / ACN14a) protein is UPF0182 protein FRAAL6027.